The sequence spans 295 residues: Protoheme IX farnesyltransferase (295 aa).

Helical transmembrane passes span Val-8–Ala-28, Tyr-35–Phe-55, Val-74–Ile-94, Pro-106–Leu-125, Val-132–Ala-152, Leu-162–Phe-182, Ile-208–Ala-228, Leu-233–Ala-253, and Phe-264–Val-284.

It belongs to the UbiA prenyltransferase family. Protoheme IX farnesyltransferase subfamily.

It is found in the cell inner membrane. It catalyses the reaction heme b + (2E,6E)-farnesyl diphosphate + H2O = Fe(II)-heme o + diphosphate. It participates in porphyrin-containing compound metabolism; heme O biosynthesis; heme O from protoheme: step 1/1. Its function is as follows. Converts heme B (protoheme IX) to heme O by substitution of the vinyl group on carbon 2 of heme B porphyrin ring with a hydroxyethyl farnesyl side group. The sequence is that of Protoheme IX farnesyltransferase from Cronobacter sakazakii (strain ATCC BAA-894) (Enterobacter sakazakii).